The sequence spans 204 residues: Bombinin-like peptides 1 (204 aa).

Positions 1 to 16 (MNFKYIVAVSILIASA) form a signal peptide, or 18. An asparagine amide mark is found at Asn70 and Asn133.

Belongs to the bombinin family. In terms of tissue distribution, expressed by the skin glands.

It is found in the secreted. Has antimicrobial activity, but no hemolytic activity. Preference on killing Gram-negative non-enteric bacteria. The chain is Bombinin-like peptides 1 from Bombina orientalis (Oriental fire-bellied toad).